Consider the following 810-residue polypeptide: DNA gyrase subunit A (810 aa).

Positions 36–502 (LPDVRDGLKP…EVLKTSMSDL (467 aa)) constitute a Topo IIA-type catalytic domain. Tyr124 (O-(5'-phospho-DNA)-tyrosine intermediate) is an active-site residue. Positions 499 to 810 (MSDLMQKENI…SLVSVSKFIK (312 aa)) are C-terminal domain. The GyrA-box motif lies at 529–535 (QGTGGKG).

This sequence belongs to the type II topoisomerase GyrA/ParC subunit family. Heterotetramer, composed of two GyrA and two GyrB chains. In the heterotetramer, GyrA contains the active site tyrosine that forms a transient covalent intermediate with DNA, while GyrB binds cofactors and catalyzes ATP hydrolysis.

It is found in the cytoplasm. The catalysed reaction is ATP-dependent breakage, passage and rejoining of double-stranded DNA.. In terms of biological role, a type II topoisomerase that negatively supercoils closed circular double-stranded (ds) DNA in an ATP-dependent manner to modulate DNA topology and maintain chromosomes in an underwound state. Negative supercoiling favors strand separation, and DNA replication, transcription, recombination and repair, all of which involve strand separation. Also able to catalyze the interconversion of other topological isomers of dsDNA rings, including catenanes and knotted rings. Type II topoisomerases break and join 2 DNA strands simultaneously in an ATP-dependent manner. This chain is DNA gyrase subunit A, found in Borreliella burgdorferi (strain ATCC 35210 / DSM 4680 / CIP 102532 / B31) (Borrelia burgdorferi).